The following is a 266-amino-acid chain: Putative carbamate hydrolase RutD (266 aa).

The 106-residue stretch at 14–119 (PVVVLSAGLG…LVNGWLSLSP (106 aa)) folds into the AB hydrolase-1 domain.

Belongs to the AB hydrolase superfamily. Hydrolase RutD family.

It catalyses the reaction carbamate + 2 H(+) = NH4(+) + CO2. Its function is as follows. Involved in pyrimidine catabolism. May facilitate the hydrolysis of carbamate, a reaction that can also occur spontaneously. This Klebsiella pneumoniae subsp. pneumoniae (strain ATCC 700721 / MGH 78578) protein is Putative carbamate hydrolase RutD.